The following is a 458-amino-acid chain: Mitochondrial distribution and morphology protein 10 (458 aa).

The interval 307-339 is disordered; it reads LDQRRTEPLDAPNTNSSVFSKERVQKKQGPKED. A compositionally biased stretch (basic and acidic residues) spans 326–339; that stretch reads SKERVQKKQGPKED.

The protein belongs to the MDM10 family. Component of the ER-mitochondria encounter structure (ERMES) or MDM complex, composed of MMM1, MDM10, MDM12 and MDM34. Associates with the mitochondrial outer membrane sorting assembly machinery SAM(core) complex.

Its subcellular location is the mitochondrion outer membrane. In terms of biological role, component of the ERMES/MDM complex, which serves as a molecular tether to connect the endoplasmic reticulum and mitochondria. Components of this complex are involved in the control of mitochondrial shape and protein biogenesis and may function in phospholipid exchange. MDM10 is involved in the late assembly steps of the general translocase of the mitochondrial outer membrane (TOM complex). Functions in the TOM40-specific route of the assembly of outer membrane beta-barrel proteins, including the association of TOM40 with the receptor TOM22 and small TOM proteins. Can associate with the SAM(core) complex as well as the MDM12-MMM1 complex, both involved in late steps of the major beta-barrel assembly pathway, that is responsible for biogenesis of all outer membrane beta-barrel proteins. May act as a switch that shuttles between both complexes and channels precursor proteins into the TOM40-specific pathway. Plays a role in mitochondrial morphology and in the inheritance of mitochondria. The protein is Mitochondrial distribution and morphology protein 10 of Lachancea thermotolerans (strain ATCC 56472 / CBS 6340 / NRRL Y-8284) (Yeast).